Consider the following 408-residue polypeptide: Bifunctional polynucleotide phosphatase/kinase (408 aa).

The tract at residues 1–38 (MSSKKRKSPPQESLTSYFEKSSKSSKKYGSQNKDSDSS) is disordered. Ser8 carries the post-translational modification Phosphoserine. Composition is skewed to polar residues over residues 10-19 (PQESLTSYFE) and 28-38 (YGSQNKDSDSS). 263 to 270 (GFPSSGKS) is an ATP binding site.

It in the N-terminal section; belongs to the DNA 3' phosphatase family.

It is found in the nucleus. The enzyme catalyses a 3'end (2'-deoxyribonucleotide 3'-phosphate)-DNA + H2O = a 3'-end 2'-deoxyribonucleotide-DNA + phosphate. It carries out the reaction a 5'-end dephospho-2'-deoxyribonucleoside-DNA + ATP = a 5'-end 5'-phospho-2'-deoxyribonucleoside-DNA + ADP + H(+). Its function is as follows. Catalyzes the phosphorylation of DNA at 5'-hydroxyl termini and can dephosphorylate its 3'-phosphate termini. Has a role in the repair of breaks in single-stranded DNA. The chain is Bifunctional polynucleotide phosphatase/kinase (pnk1) from Schizosaccharomyces pombe (strain 972 / ATCC 24843) (Fission yeast).